The following is a 55-amino-acid chain: Large ribosomal subunit protein bL33 (55 aa).

The protein belongs to the bacterial ribosomal protein bL33 family.

This is Large ribosomal subunit protein bL33 from Bartonella quintana (strain Toulouse) (Rochalimaea quintana).